A 603-amino-acid polypeptide reads, in one-letter code: Elongation factor 4 (603 aa).

Residues 7–189 (SRIRNFSIIA…AIVQQVPPPA (183 aa)) enclose the tr-type G domain. Residues 19 to 24 (DHGKST) and 136 to 139 (NKID) contribute to the GTP site.

Belongs to the TRAFAC class translation factor GTPase superfamily. Classic translation factor GTPase family. LepA subfamily.

The protein resides in the cell inner membrane. It carries out the reaction GTP + H2O = GDP + phosphate + H(+). In terms of biological role, required for accurate and efficient protein synthesis under certain stress conditions. May act as a fidelity factor of the translation reaction, by catalyzing a one-codon backward translocation of tRNAs on improperly translocated ribosomes. Back-translocation proceeds from a post-translocation (POST) complex to a pre-translocation (PRE) complex, thus giving elongation factor G a second chance to translocate the tRNAs correctly. Binds to ribosomes in a GTP-dependent manner. This Synechocystis sp. (strain ATCC 27184 / PCC 6803 / Kazusa) protein is Elongation factor 4.